The following is a 732-amino-acid chain: Catalase-peroxidase (732 aa).

The disordered stretch occupies residues 1 to 23; that stretch reads MSEQSRCPVTGRTADSPATGSGL. The segment at residues 97 to 220 is a cross-link (tryptophyl-tyrosyl-methioninium (Trp-Tyr) (with M-246)); the sequence is WHSAGTYRTS…LAAVQMGLIY (124 aa). The active-site Proton acceptor is H98. A cross-link (tryptophyl-tyrosyl-methioninium (Tyr-Met) (with W-97)) is located at residues 220-246; it reads YVNPEGPDGKPDPVAAGRDIRETFARM. Residue H261 participates in heme b binding.

The protein belongs to the peroxidase family. Peroxidase/catalase subfamily. Homodimer or homotetramer. Heme b serves as cofactor. In terms of processing, formation of the three residue Trp-Tyr-Met cross-link is important for the catalase, but not the peroxidase activity of the enzyme.

It catalyses the reaction H2O2 + AH2 = A + 2 H2O. The catalysed reaction is 2 H2O2 = O2 + 2 H2O. In terms of biological role, bifunctional enzyme with both catalase and broad-spectrum peroxidase activity. The sequence is that of Catalase-peroxidase from Prosthecochloris aestuarii (strain DSM 271 / SK 413).